A 136-amino-acid polypeptide reads, in one-letter code: T-cell receptor alpha chain constant (136 aa).

One can recognise an Ig-like C1-type domain in the interval 19–103; sequence STLCLFTDFD…LTEKSFETDM (85 aa). A disulfide bridge links cysteine 22 with cysteine 72. 3 N-linked (GlcNAc...) asparagine glycosylation sites follow: asparagine 66, asparagine 80, and asparagine 109. The interval 90-111 is connecting peptide; sequence CDATLTEKSFETDMNLNFQNLS. Residues 111–131 traverse the membrane as a helical segment; the sequence is SVMGLRILLLKVAGFNLLMTL. The Cytoplasmic portion of the chain corresponds to 132-136; the sequence is RLWSS.

In terms of assembly, alpha-beta TR is a heterodimer composed of an alpha and beta chain; disulfide-linked. The alpha-beta TR is associated with the transmembrane signaling CD3 coreceptor proteins to form the TR-CD3 (TcR or TCR). The assembly of alpha-beta TR heterodimers with CD3 occurs in the endoplasmic reticulum where a single alpha-beta TR heterodimer associates with one CD3D-CD3E heterodimer, one CD3G-CD3E heterodimer and one CD247 homodimer forming a stable octameric structure. CD3D-CD3E and CD3G-CD3E heterodimers preferentially associate with TR alpha and TR beta chains, respectively. The association of the CD247 homodimer is the last step of TcR assembly in the endoplasmic reticulum and is required for transport to the cell surface.

Its subcellular location is the cell membrane. Functionally, constant region of T cell receptor (TR) alpha chain. Alpha-beta T cell receptors are antigen specific receptors which are essential to the immune response and are present on the cell surface of T lymphocytes. Recognize peptide-major histocompatibility (MH) (pMH) complexes that are displayed by antigen presenting cells (APC), a prerequisite for efficient T cell adaptive immunity against pathogens. Binding of alpha-beta TR to pMH complex initiates TR-CD3 clustering on the cell surface and intracellular activation of LCK that phosphorylates the ITAM motifs of CD3G, CD3D, CD3E and CD247 enabling the recruitment of ZAP70. In turn, ZAP70 phosphorylates LAT, which recruits numerous signaling molecules to form the LAT signalosome. The LAT signalosome propagates signal branching to three major signaling pathways, the calcium, the mitogen-activated protein kinase (MAPK) kinase and the nuclear factor NF-kappa-B (NF-kB) pathways, leading to the mobilization of transcription factors that are critical for gene expression and essential for T cell growth and differentiation. The T cell repertoire is generated in the thymus, by V-(D)-J rearrangement. This repertoire is then shaped by intrathymic selection events to generate a peripheral T cell pool of self-MH restricted, non-autoaggressive T cells. Post-thymic interaction of alpha-beta TR with the pMH complexes shapes TR structural and functional avidity. In Mus musculus (Mouse), this protein is T-cell receptor alpha chain constant.